A 790-amino-acid chain; its full sequence is Serine/threonine-protein kinase DCLK3 (790 aa).

Residues 1-37 are disordered; sequence MPAAPVLRPPPPPATPAPPAPSRPAPPIPGHRGPCDH. A compositionally biased stretch (pro residues) spans 7–29; it reads LRPPPPPATPAPPAPSRPAPPIP. Residues 97-183 enclose the Doublecortin domain; sequence RVVTVVKLGG…KEPLTLKSIQ (87 aa). A compositionally biased stretch (low complexity) spans 201 to 218; it reads HSRVPSPRLRSRLPSKLL. Disordered stretches follow at residues 201-290 and 315-506; these read HSRV…SGEK and LQLG…KGII. Basic and acidic residues-rich tracts occupy residues 332–345, 352–400, 425–434, and 457–496; these read DLGRAQKRDSEKLV, RPSE…ESQD, IDMRREDRHT, and TRGEEKQAEHEKKPGGLGERRAPEKESKRKLEEKRPERPS. One can recognise a Protein kinase domain in the interval 514–771; sequence YDIGGVIGDG…AEQVLQHPWI (258 aa). ATP is bound by residues 520–528 and lysine 543; that span reads IGDGNFATV. Aspartate 635 functions as the Proton acceptor in the catalytic mechanism.

This sequence belongs to the protein kinase superfamily. CAMK Ser/Thr protein kinase family. CaMK subfamily. In terms of tissue distribution, highly expressed in brain and to a lower extent in liver and kidney.

It is found in the cytoplasm. The protein localises to the nucleus. The catalysed reaction is L-seryl-[protein] + ATP = O-phospho-L-seryl-[protein] + ADP + H(+). It carries out the reaction L-threonyl-[protein] + ATP = O-phospho-L-threonyl-[protein] + ADP + H(+). The polypeptide is Serine/threonine-protein kinase DCLK3 (Dclk3) (Mus musculus (Mouse)).